The primary structure comprises 394 residues: Cytochrome b (394 aa).

The next 4 membrane-spanning stretches (helical) occupy residues 39–59 (FGSLAGICLVIQIVTGVFLAM), 83–105 (WLLRYMHANGASMFFIVVYLHTF), 120–140 (VWCLGVVIFLLMIVTAFIGYV), and 186–206 (FFSLYHLLPFILVGASLLHLA). Heme b-binding residues include His-89 and His-103. Heme b is bound by residues His-191 and His-204. A ubiquinone is bound at residue His-209. Transmembrane regions (helical) follow at residues 232–252 (FYVKDLVGWVAFAIFFSIWIF), 296–316 (AGGVAAIALVFICLLALPFFK), 328–348 (IYQGIFWLLLADCLLLGWIGC), and 355–374 (FVTIGQISSIVFFLFFAITP).

This sequence belongs to the cytochrome b family. As to quaternary structure, the main subunits of complex b-c1 are: cytochrome b, cytochrome c1 and the Rieske protein. Requires heme b as cofactor.

It is found in the mitochondrion inner membrane. Its function is as follows. Component of the ubiquinol-cytochrome c reductase complex (complex III or cytochrome b-c1 complex) that is part of the mitochondrial respiratory chain. The b-c1 complex mediates electron transfer from ubiquinol to cytochrome c. Contributes to the generation of a proton gradient across the mitochondrial membrane that is then used for ATP synthesis. The chain is Cytochrome b (MT-CYB) from Oenothera berteroana (Bertero's evening primrose).